The following is a 266-amino-acid chain: Type II iodothyronine deiodinase (266 aa).

Topologically, residues 1 to 9 are lumenal; it reads MGLLSVDLL. The helical; Signal-anchor for type III membrane protein transmembrane segment at 10-34 threads the bilayer; it reads ITLQILPVFFSNCLFLALYDSVILL. Residues 35–266 are Cytoplasmic-facing; that stretch reads KHVALLLSRS…KNFSKRUILD (232 aa). The active site involves Sec-130. 2 non-standard amino acids (selenocysteine) are found at residues Sec-130 and Sec-263.

The protein belongs to the iodothyronine deiodinase family. As to quaternary structure, predominantly monomer. Can form homodimers but homodimerization is not essential for enzyme activity. Interacts with USP20 and USP33. Interacts with MARCHF6. Post-translationally, ubiquitinated by MARCHF6, leading to its degradation by the proteasome. Deubiquitinated by USP20 and USP33. Expressed in mammary gland and in brain.

Its subcellular location is the endoplasmic reticulum membrane. It catalyses the reaction 3,3',5-triiodo-L-thyronine + iodide + A + H(+) = L-thyroxine + AH2. The catalysed reaction is 3,3'-diiodo-L-thyronine + iodide + A + H(+) = 3,3',5'-triiodo-L-thyronine + AH2. It carries out the reaction 3'-iodo-L-thyronine + iodide + A + H(+) = 3',5'-diiodo-L-thyronine + AH2. The enzyme catalyses 3,3'-diiodothyronamine + iodide + A + H(+) = 3,3',5'-triiodothyronamine + AH2. It catalyses the reaction 3'-iodothyronamine + iodide + A + H(+) = 3',5'-diiodothyronamine + AH2. Functionally, plays a crucial role in the metabolism of thyroid hormones (TH) and has specific roles in TH activation and inactivation by deiodination. Catalyzes the deiodination of L-thyroxine (T4) to 3,5,3'-triiodothyronine (T3) and 3,3',5'-triiodothyronine (rT3) to 3,3'-diiodothyronine (3,3'-T2) via outer-ring deiodination (ORD). Catalyzes the deiodination of 3',5'-diiodothyronine (3',5'-T2) to 3'-monoiodothyronine (3'-T1) via ORD. Catalyzes the phenolic ring deiodinations of 3,3',5'-triiodothyronamine and 3',5'- diiodothyronamine. This chain is Type II iodothyronine deiodinase (Dio2), found in Mus musculus (Mouse).